The sequence spans 194 residues: NADH-quinone oxidoreductase subunit B (194 aa).

[4Fe-4S] cluster-binding residues include Cys73, Cys74, Cys138, and Cys168.

The protein belongs to the complex I 20 kDa subunit family. As to quaternary structure, NDH-1 is composed of 14 different subunits. Subunits NuoB, C, D, E, F, and G constitute the peripheral sector of the complex. The cofactor is [4Fe-4S] cluster.

The protein localises to the cell inner membrane. It carries out the reaction a quinone + NADH + 5 H(+)(in) = a quinol + NAD(+) + 4 H(+)(out). Its function is as follows. NDH-1 shuttles electrons from NADH, via FMN and iron-sulfur (Fe-S) centers, to quinones in the respiratory chain. The immediate electron acceptor for the enzyme in this species is believed to be ubiquinone. Couples the redox reaction to proton translocation (for every two electrons transferred, four hydrogen ions are translocated across the cytoplasmic membrane), and thus conserves the redox energy in a proton gradient. This is NADH-quinone oxidoreductase subunit B from Bradyrhizobium sp. (strain BTAi1 / ATCC BAA-1182).